Consider the following 583-residue polypeptide: CTP synthase (583 aa).

Positions Met1 to Leu278 are amidoligase domain. Ser20 serves as a coordination point for CTP. Ser20 serves as a coordination point for UTP. Residues Ser21 to Leu26 and Asp78 contribute to the ATP site. Residues Asp78 and Glu152 each contribute to the Mg(2+) site. CTP contacts are provided by residues Asp159–Glu161, Lys199–Gln204, and Lys235. UTP is bound by residues Lys199–Gln204 and Lys235. The region spanning Arg303–Gly551 is the Glutamine amidotransferase type-1 domain. Gly366 lines the L-glutamine pocket. Cys393 functions as the Nucleophile; for glutamine hydrolysis in the catalytic mechanism. L-glutamine contacts are provided by residues Leu394–Gln397, Glu416, and Arg477. Residues His524 and Glu526 contribute to the active site. The segment at Pro559–Gly583 is disordered.

This sequence belongs to the CTP synthase family. In terms of assembly, homotetramer.

The catalysed reaction is UTP + L-glutamine + ATP + H2O = CTP + L-glutamate + ADP + phosphate + 2 H(+). The enzyme catalyses L-glutamine + H2O = L-glutamate + NH4(+). It catalyses the reaction UTP + NH4(+) + ATP = CTP + ADP + phosphate + 2 H(+). The protein operates within pyrimidine metabolism; CTP biosynthesis via de novo pathway; CTP from UDP: step 2/2. Allosterically activated by GTP, when glutamine is the substrate; GTP has no effect on the reaction when ammonia is the substrate. The allosteric effector GTP functions by stabilizing the protein conformation that binds the tetrahedral intermediate(s) formed during glutamine hydrolysis. Inhibited by the product CTP, via allosteric rather than competitive inhibition. Functionally, catalyzes the ATP-dependent amination of UTP to CTP with either L-glutamine or ammonia as the source of nitrogen. Regulates intracellular CTP levels through interactions with the four ribonucleotide triphosphates. The sequence is that of CTP synthase from Mycobacterium ulcerans (strain Agy99).